We begin with the raw amino-acid sequence, 307 residues long: Geranylgeranyl diphosphate synthase (307 aa).

Isopentenyl diphosphate-binding residues include Lys52, Arg55, and His86. Residues Asp93 and Asp99 each coordinate Mg(2+). Arg104 serves as a coordination point for (2E,6E)-farnesyl diphosphate. Arg105 lines the isopentenyl diphosphate pocket. Residues Lys188, Thr189, and Gln226 each contribute to the (2E,6E)-farnesyl diphosphate site.

The protein belongs to the FPP/GGPP synthase family. Requires Mg(2+) as cofactor.

The enzyme catalyses isopentenyl diphosphate + (2E,6E)-farnesyl diphosphate = (2E,6E,10E)-geranylgeranyl diphosphate + diphosphate. Its pathway is isoprenoid biosynthesis; geranylgeranyl diphosphate biosynthesis; geranylgeranyl diphosphate from farnesyl diphosphate and isopentenyl diphosphate: step 1/1. In terms of biological role, catalyzes the condensation of farnesyl diphosphate (FPP) and isopentenyl diphosphate (IPP) to yield geranylgeranyl diphosphate (GGPP) needed for biosynthesis of carotenoids and diterpenes. This chain is Geranylgeranyl diphosphate synthase (crtE), found in Pseudescherichia vulneris (Escherichia vulneris).